The primary structure comprises 224 residues: Large ribosomal subunit protein uL1m (224 aa).

Belongs to the universal ribosomal protein uL1 family.

Its subcellular location is the mitochondrion. This chain is Large ribosomal subunit protein uL1m (RPL1), found in Reclinomonas americana.